We begin with the raw amino-acid sequence, 329 residues long: Ribosomal RNA small subunit methyltransferase H (329 aa).

S-adenosyl-L-methionine is bound by residues 47-49, Asp-67, Phe-93, Asp-115, and Gln-122; that span reads GGH.

This sequence belongs to the methyltransferase superfamily. RsmH family.

The protein resides in the cytoplasm. The catalysed reaction is cytidine(1402) in 16S rRNA + S-adenosyl-L-methionine = N(4)-methylcytidine(1402) in 16S rRNA + S-adenosyl-L-homocysteine + H(+). Specifically methylates the N4 position of cytidine in position 1402 (C1402) of 16S rRNA. This chain is Ribosomal RNA small subunit methyltransferase H, found in Blochmanniella pennsylvanica (strain BPEN).